We begin with the raw amino-acid sequence, 273 residues long: MYRLAAFDMDGTLLMRDHKIGSITLNALHQLADAGVTLTFATGRHYLDMKGILSHSGLNGYLITGNGTRVCDAEGNPLYGMDLPAELVEFVLRTPWQTNASIHLFRDDGWFTDRNDPDLLIAHTTSGFHFQLTEWDELPLTGNHKFCFIVSHQELVELKAQLEQQMSGEADFCFSATDCLEVLPRGCNKGVALEKLSHHLDLTLADCMAFGDAMNDKEMLSRVGRGLVMGNALPQLKQELPQLQIIGRCEQQGVAHYLHHWLSSPHLTYSPEF.

Catalysis depends on D8, which acts as the Nucleophile. Residues D8, D10, and D212 each contribute to the Mg(2+) site.

Belongs to the HAD-like hydrolase superfamily. Cof family. It depends on Mg(2+) as a cofactor.

It catalyses the reaction 4-amino-2-methyl-5-(diphosphooxymethyl)pyrimidine + H2O = 4-amino-2-methyl-5-(phosphooxymethyl)pyrimidine + phosphate + H(+). Functionally, catalyzes the hydrolysis of 4-amino-2-methyl-5-hydroxymethylpyrimidine pyrophosphate (HMP-PP) to 4-amino-2-methyl-5-hydroxymethylpyrimidine phosphate (HMP-P). This Yersinia pseudotuberculosis serotype I (strain IP32953) protein is HMP-PP phosphatase.